Reading from the N-terminus, the 817-residue chain is Lon protease 1 (817 aa).

The 199-residue stretch at Val18–Ile216 folds into the Lon N-terminal domain. Gly368–Thr375 provides a ligand contact to ATP. The Lon proteolytic domain maps to Glu604 to Leu785. Catalysis depends on residues Ser691 and Lys734. The segment at Glu789–Ala817 is disordered.

This sequence belongs to the peptidase S16 family. Homohexamer. Organized in a ring with a central cavity.

It is found in the cytoplasm. It carries out the reaction Hydrolysis of proteins in presence of ATP.. Its function is as follows. ATP-dependent serine protease that mediates the selective degradation of mutant and abnormal proteins as well as certain short-lived regulatory proteins. Required for cellular homeostasis and for survival from DNA damage and developmental changes induced by stress. Degrades polypeptides processively to yield small peptide fragments that are 5 to 10 amino acids long. Binds to DNA in a double-stranded, site-specific manner. The sequence is that of Lon protease 1 from Myxococcus xanthus.